Here is a 520-residue protein sequence, read N- to C-terminus: GMP synthase [glutamine-hydrolyzing] (520 aa).

In terms of domain architecture, Glutamine amidotransferase type-1 spans 3–200 (AIAIIDFGSQ…FLDIANCKRD (198 aa)). Residue Cys84 is the Nucleophile of the active site. Residues His175 and Glu177 contribute to the active site. The GMPS ATP-PPase domain maps to 201-386 (WTMKSIIEKQ…IGLSNEIIFQ (186 aa)). 228-234 (SGGVDSS) is an ATP binding site.

As to quaternary structure, homodimer.

It catalyses the reaction XMP + L-glutamine + ATP + H2O = GMP + L-glutamate + AMP + diphosphate + 2 H(+). The protein operates within purine metabolism; GMP biosynthesis; GMP from XMP (L-Gln route): step 1/1. Catalyzes the synthesis of GMP from XMP. The protein is GMP synthase [glutamine-hydrolyzing] of Wolbachia sp. subsp. Brugia malayi (strain TRS).